A 701-amino-acid polypeptide reads, in one-letter code: Acetyl-coenzyme A synthetase, cytoplasmic (701 aa).

Positions 1–41 (MGLPEERVRSGSGSRGQEEAGAGGRARSWSPPPEVSRSAHV) are disordered. The tract at residues 1–107 (MGLPEERVRS…GATTNICYNV (107 aa)) is interaction with TFEB. S28, S30, and S36 each carry phosphoserine. 219-222 (RGEK) lines the CoA pocket. S263, S265, and S267 each carry phosphoserine. Residue T363 participates in CoA binding. K418 is subject to N6-acetyllysine. ATP is bound by residues 439–441 (GEP), 463–468 (DTFWQT), D552, and R567. Residues S575 and R636 each contribute to the CoA site. The short motif at 656-668 (KTRSGKIMRRVLR) is the Nuclear localization signal element. At S659 the chain carries Phosphoserine; by AMPK. K661 is subject to N6-acetyllysine.

This sequence belongs to the ATP-dependent AMP-binding enzyme family. Monomer. Interacts with TFEB. AMPK-mediated phosphorylated form at Ser-659 interacts with KPNA1; this interaction results in nuclear translocation of ACSS2. Interacts with the 'Thr-172' phosphorylated form of PRKAA2. Interacts with CREBBP. Reversibly acetylated at Lys-661. The acetyl-CoA synthase activity is inhibited by acetylation and activated by deacetylation mediated by the deacetylases SIRT1 and SIRT3. In terms of processing, glucose deprivation results in its AMPK-dependent phosphorylation at Ser-659, which leads to exposure of its nuclear localization signal, required for its interaction with KPNA1 and subsequent translocation to the nucleus.

It is found in the cytoplasm. The protein resides in the cytosol. The protein localises to the nucleus. It carries out the reaction acetate + ATP + CoA = acetyl-CoA + AMP + diphosphate. The catalysed reaction is propanoate + ATP + CoA = propanoyl-CoA + AMP + diphosphate. Its activity is regulated as follows. Inhibited by acetylation at Lys-661 and activated by deacetylation mediated by the deacetylases SIRT1 and SIRT3. Functionally, catalyzes the synthesis of acetyl-CoA from short-chain fatty acids. Acetate is the preferred substrate. Can also utilize propionate with a much lower affinity. Nuclear ACSS2 promotes glucose deprivation-induced lysosomal biogenesis and autophagy, tumor cell survival and brain tumorigenesis. Glucose deprivation results in AMPK-mediated phosphorylation of ACSS2 leading to its translocation to the nucleus where it binds to TFEB and locally produces acetyl-CoA for histone acetylation in the promoter regions of TFEB target genes thereby activating their transcription. The regulation of genes associated with autophagy and lysosomal activity through ACSS2 is important for brain tumorigenesis and tumor survival. Acts as a chromatin-bound transcriptional coactivator that up-regulates histone acetylation and expression of neuronal genes. Can be recruited to the loci of memory-related neuronal genes to maintain a local acetyl-CoA pool, providing the substrate for histone acetylation and promoting the expression of specific genes, which is essential for maintaining long-term spatial memory. The sequence is that of Acetyl-coenzyme A synthetase, cytoplasmic (ACSS2) from Homo sapiens (Human).